Here is a 241-residue protein sequence, read N- to C-terminus: Proteasome subunit alpha (241 aa).

It belongs to the peptidase T1A family. The 20S proteasome core is composed of 14 alpha and 14 beta subunits that assemble into four stacked heptameric rings, resulting in a barrel-shaped structure. The two inner rings, each composed of seven catalytic beta subunits, are sandwiched by two outer rings, each composed of seven alpha subunits. The catalytic chamber with the active sites is on the inside of the barrel. Has a gated structure, the ends of the cylinder being occluded by the N-termini of the alpha-subunits. Is capped by the proteasome-associated ATPase, ARC.

Its subcellular location is the cytoplasm. Its pathway is protein degradation; proteasomal Pup-dependent pathway. Its activity is regulated as follows. The formation of the proteasomal ATPase ARC-20S proteasome complex, likely via the docking of the C-termini of ARC into the intersubunit pockets in the alpha-rings, may trigger opening of the gate for substrate entry. Interconversion between the open-gate and close-gate conformations leads to a dynamic regulation of the 20S proteasome proteolysis activity. Functionally, component of the proteasome core, a large protease complex with broad specificity involved in protein degradation. The chain is Proteasome subunit alpha from Frankia alni (strain DSM 45986 / CECT 9034 / ACN14a).